We begin with the raw amino-acid sequence, 191 residues long: Rho-related GTP-binding protein RhoH (191 aa).

11-18 contacts GTP; it reads GDSAVGKT. Positions 33–41 match the Effector region motif; that stretch reads YKPTVYENT. 58 to 62 lines the GTP pocket; that stretch reads DTAGN. The interval 73-86 is interaction with ZAP70; sequence YQQADVVLMCYSVA. 116-119 contributes to the GTP binding site; the sequence is TQTD. Cysteine 188 is modified (cysteine methyl ester). Cysteine 188 carries S-geranylgeranyl cysteine lipidation. A propeptide spans 189–191 (removed in mature form); it reads KIL.

It belongs to the small GTPase superfamily. Rho family. As to quaternary structure, interacts with GDI1 and GDI2. Interacts with ZAP70 (via SH2 domains) and the interaction is enhanced by its phosphorylation by LCK. Interacts with SYK and the interaction is enhanced by its phosphorylation by FYN. Phosphorylated on tyrosine by LCK. Phosphorylated by FYN. Phosphorylation enhances the interactions with ZAP70 and SYK and is critical for its function in thymocyte development.

The protein localises to the cytoplasm. It is found in the cell membrane. Functionally, binds GTP but lacks intrinsic GTPase activity and is resistant to Rho-specific GTPase-activating proteins. Inhibits the activation of NF-kappa-B by TNF and IKKB and the activation of CRK/p38 by TNF. Inhibits activities of RAC1, RHOA and CDC42. Negatively regulates leukotriene production in neutrophils. Negative regulator of hematopoietic progenitor cell proliferation, survival and migration. Critical regulator of thymocyte development and T-cell antigen receptor (TCR) signaling by mediating recruitment and activation of ZAP70. Required for phosphorylation of CD3Z, membrane translocation of ZAP70 and subsequent activation of the ZAP70-mediated pathways. Essential for efficient beta-selection and positive selection by promoting the ZAP70-dependent phosphorylation of the LAT signalosome during pre-TCR and TCR signaling. Crucial for thymocyte maturation during DN3 to DN4 transition and during positive selection. Plays critical roles in mast cell function by facilitating phosphorylation of SYK in Fc epsilon RI-mediated signal transduction. Essential for the phosphorylation of LAT, LCP2, PLCG1 and PLCG2 and for Ca(2+) mobilization in mast cells. The sequence is that of Rho-related GTP-binding protein RhoH (RHOH) from Bos taurus (Bovine).